Reading from the N-terminus, the 221-residue chain is Probable septum site-determining protein MinC (221 aa).

This sequence belongs to the MinC family. Interacts with MinD and FtsZ.

Its function is as follows. Cell division inhibitor that blocks the formation of polar Z ring septums. Rapidly oscillates between the poles of the cell to destabilize FtsZ filaments that have formed before they mature into polar Z rings. Prevents FtsZ polymerization. The protein is Probable septum site-determining protein MinC of Aliivibrio fischeri (strain MJ11) (Vibrio fischeri).